The primary structure comprises 221 residues: uncharacterized protein (221 aa).

This is an uncharacterized protein from Escherichia coli (strain K12).